Consider the following 424-residue polypeptide: Cysteate synthase (424 aa).

Lysine 106 carries the N6-(pyridoxal phosphate)lysine modification. 2 residues coordinate pyridoxal 5'-phosphate: asparagine 132 and threonine 381.

It belongs to the threonine synthase family. Cysteate synthase subfamily. Homotrimer. It depends on pyridoxal 5'-phosphate as a cofactor.

The enzyme catalyses O-phospho-L-serine + sulfite + H(+) = L-cysteate + phosphate. Its pathway is cofactor biosynthesis; coenzyme M biosynthesis. Its function is as follows. Specifically catalyzes the beta-elimination of phosphate from L-phosphoserine and the beta-addition of sulfite to the dehydroalanine intermediate to produce L-cysteate. The chain is Cysteate synthase from Methanoregula boonei (strain DSM 21154 / JCM 14090 / 6A8).